We begin with the raw amino-acid sequence, 276 residues long: METWRFIDSGDRDPAYNMALDEALLNWHSEGLIPPTIRFYGWNPPTLSIGYFQKVQKEINMEMVEKHQLGFVRRPTGGRGVLHDKELTYSVIVTEEHPDMPASVTEAYRIISQGILEGFRDLGLDAYFAVPKTEEEKNALKNPRSAVCFDAPSWYELVVEGRKVAGSAQTRQKGVILQHGSIVLDIDEDKLFDLFNYPSERVRERMQRNFKNKAVPINELRDVPLSMEEVKKAFKDGFEKGLSIKLEPYTLTDAEEAEVKQIAKERYETDEWNFRK.

The BPL/LPL catalytic domain occupies 31 to 246; the sequence is GLIPPTIRFY…GFEKGLSIKL (216 aa). The active-site Acyl-thioester intermediate is the Cys148.

Belongs to the octanoyltransferase LipM family. Monomer.

The enzyme catalyses octanoyl-[ACP] + L-lysyl-[protein] = N(6)-octanoyl-L-lysyl-[protein] + holo-[ACP] + H(+). It participates in protein modification; protein lipoylation via endogenous pathway; protein N(6)-(lipoyl)lysine from octanoyl-[acyl-carrier-protein]. Functionally, catalyzes the transfer of endogenously produced octanoic acid from octanoyl-acyl-carrier-protein onto the lipoyl domain of GcvH, an intermediate carrier during protein lipoylation. The sequence is that of Octanoyltransferase LipM from Halalkalibacterium halodurans (strain ATCC BAA-125 / DSM 18197 / FERM 7344 / JCM 9153 / C-125) (Bacillus halodurans).